The chain runs to 96 residues: Basic blue protein (96 aa).

Residues Ala1 to Leu96 enclose the Phytocyanin domain. 4 residues coordinate Cu cation: His39, Cys79, His84, and Met89. Cys52 and Cys85 form a disulfide bridge.

In Cucumis sativus (Cucumber), this protein is Basic blue protein.